The following is a 485-amino-acid chain: E3 ubiquitin-protein ligase TRIM58 (485 aa).

The RING-type zinc finger occupies 15-59; it reads CSVCLDFLQEPISVDCGHSFCLRCISEFCEKSDSAQGVYACPQCR. The B box-type zinc-finger motif lies at 90–131; sequence AGSRQCARHGEDLSHFCEEDQTMLCWVCDTSPEHRSHRTETL. 4 residues coordinate Zn(2+): cysteine 95, histidine 98, cysteine 117, and histidine 123. Residues 192 to 241 are a coiled coil; it reads LAQEEQLQLRRLEEEERATLQRLRDSRNRLAQQNKALKELAEELEERSQR. The 196-residue stretch at 271 to 466 folds into the B30.2/SPRY domain; sequence DLKTVCRIPG…LPPMTEAAPG (196 aa).

The protein belongs to the TRIM/RBCC family. In terms of tissue distribution, expressed in erythroblasts.

The enzyme catalyses S-ubiquitinyl-[E2 ubiquitin-conjugating enzyme]-L-cysteine + [acceptor protein]-L-lysine = [E2 ubiquitin-conjugating enzyme]-L-cysteine + N(6)-ubiquitinyl-[acceptor protein]-L-lysine.. Its pathway is protein modification; protein ubiquitination. E3 ubiquitin ligase induced during late erythropoiesis. Directly binds and ubiquitinates the intermediate chain of the microtubule motor dynein (DYNC1LI1/DYNC1LI2), stimulating the degradation of the dynein holoprotein complex. May participate in the erythroblast enucleation process through regulation of nuclear polarization. This Mus musculus (Mouse) protein is E3 ubiquitin-protein ligase TRIM58 (Trim58).